The chain runs to 255 residues: uncharacterized protein (255 aa).

The a divalent metal cation site is built by His6, His8, Glu92, His128, His153, and Asp203.

The protein belongs to the metallo-dependent hydrolases superfamily. TatD-type hydrolase family. Requires a divalent metal cation as cofactor.

This is an uncharacterized protein from Bacillus subtilis (strain 168).